A 105-amino-acid chain; its full sequence is Large ribosomal subunit protein uL24 (105 aa).

This sequence belongs to the universal ribosomal protein uL24 family. In terms of assembly, part of the 50S ribosomal subunit.

One of two assembly initiator proteins, it binds directly to the 5'-end of the 23S rRNA, where it nucleates assembly of the 50S subunit. In terms of biological role, one of the proteins that surrounds the polypeptide exit tunnel on the outside of the subunit. This Staphylococcus epidermidis (strain ATCC 35984 / DSM 28319 / BCRC 17069 / CCUG 31568 / BM 3577 / RP62A) protein is Large ribosomal subunit protein uL24.